Here is a 200-residue protein sequence, read N- to C-terminus: Small ribosomal subunit protein uS4 (200 aa).

Residues 92 to 155 (SRLDAVVYSL…QKLNVIVESV (64 aa)) enclose the S4 RNA-binding domain.

The protein belongs to the universal ribosomal protein uS4 family. In terms of assembly, part of the 30S ribosomal subunit. Contacts protein S5. The interaction surface between S4 and S5 is involved in control of translational fidelity.

Its function is as follows. One of the primary rRNA binding proteins, it binds directly to 16S rRNA where it nucleates assembly of the body of the 30S subunit. With S5 and S12 plays an important role in translational accuracy. This Staphylococcus aureus (strain MRSA252) protein is Small ribosomal subunit protein uS4.